Reading from the N-terminus, the 596-residue chain is Myosin light chain kinase 2, skeletal/cardiac muscle (596 aa).

The tract at residues 1-224 (MATENGAVEL…AGQAKMQGDT (224 aa)) is disordered. Ala2 is modified (N-acetylalanine). Residues 40–63 (DPKKAPDPPTLKKDAKAPASEKGD) are compositionally biased toward basic and acidic residues. A compositionally biased stretch (low complexity) spans 88–104 (EGSAGPPAALPQQTATP). A phosphoserine mark is found at Ser143, Ser149, and Ser151. The segment covering 189 to 209 (RPAKAEEGKNILAESQKEVGE) has biased composition (basic and acidic residues). The region spanning 285–540 (MNSKEALGGG…AAQCLAHPWL (256 aa)) is the Protein kinase domain. Residues 291–299 (LGGGKFGAV) and Lys314 each bind ATP. Asp406 (proton acceptor) is an active-site residue. Thr445 is subject to Phosphothreonine. The calmodulin-binding stretch occupies residues 574–586 (IAVSAANRFKKIS).

It belongs to the protein kinase superfamily. CAMK Ser/Thr protein kinase family. May interact with centrin. As to expression, heart and skeletal muscles. Increased expression in the apical tissue compared to the interventricular septal tissue.

The protein resides in the cytoplasm. It catalyses the reaction L-seryl-[myosin light chain] + ATP = O-phospho-L-seryl-[myosin light chain] + ADP + H(+). The enzyme catalyses L-threonyl-[myosin light chain] + ATP = O-phospho-L-threonyl-[myosin light chain] + ADP + H(+). Functionally, implicated in the level of global muscle contraction and cardiac function. Phosphorylates a specific serine in the N-terminus of a myosin light chain. The sequence is that of Myosin light chain kinase 2, skeletal/cardiac muscle (MYLK2) from Homo sapiens (Human).